The sequence spans 152 residues: Superoxide dismutase [Cu-Zn] 4AP (152 aa).

Cu cation-binding residues include H45, H47, and H62. A disulfide bridge links C56 with C145. H62, H70, H79, and D82 together coordinate Zn(2+). Residue H119 participates in Cu cation binding.

The protein belongs to the Cu-Zn superoxide dismutase family. Homodimer. Requires Cu cation as cofactor. Zn(2+) is required as a cofactor.

The protein localises to the cytoplasm. It carries out the reaction 2 superoxide + 2 H(+) = H2O2 + O2. Destroys radicals which are normally produced within the cells and which are toxic to biological systems. The chain is Superoxide dismutase [Cu-Zn] 4AP (SODCC.2) from Zea mays (Maize).